Reading from the N-terminus, the 299-residue chain is Ribosomal protein L11 methyltransferase (299 aa).

The S-adenosyl-L-methionine site is built by Thr-139, Gly-163, Asp-185, and Asn-232.

This sequence belongs to the methyltransferase superfamily. PrmA family.

The protein localises to the cytoplasm. It carries out the reaction L-lysyl-[protein] + 3 S-adenosyl-L-methionine = N(6),N(6),N(6)-trimethyl-L-lysyl-[protein] + 3 S-adenosyl-L-homocysteine + 3 H(+). Its function is as follows. Methylates ribosomal protein L11. The sequence is that of Ribosomal protein L11 methyltransferase from Crocosphaera subtropica (strain ATCC 51142 / BH68) (Cyanothece sp. (strain ATCC 51142)).